Reading from the N-terminus, the 188-residue chain is PRA1 family protein F3 (188 aa).

Transmembrane regions (helical) follow at residues Ile74 to Phe94, Thr95 to Phe115, Thr123 to Phe143, and Ile145 to Thr165.

The protein belongs to the PRA1 family. As to quaternary structure, interacts with PRA1F2 and PRA1D. Interacts with ACD11 and BPA1. As to expression, expressed in lateral roots, lateral root caps and columella cells.

It is found in the endoplasmic reticulum membrane. The protein localises to the membrane. It localises to the cytoplasm. Its function is as follows. May be involved in both secretory and endocytic intracellular trafficking in the endosomal/prevacuolar compartments. The chain is PRA1 family protein F3 from Arabidopsis thaliana (Mouse-ear cress).